Here is a 1064-residue protein sequence, read N- to C-terminus: Carbamoyl phosphate synthase large chain (1064 aa).

Residues 1 to 401 (MPKRNDIKKI…SLLKAVRSLE (401 aa)) are carboxyphosphate synthetic domain. ATP contacts are provided by R129, R169, G175, G176, E208, I210, E215, G241, V242, H243, Q284, and E298. One can recognise an ATP-grasp 1 domain in the interval 133–327 (KELCERIGEP…IAKMSAKIAI (195 aa)). Mg(2+)-binding residues include Q284, E298, and N300. The Mn(2+) site is built by Q284, E298, and N300. An oligomerization domain region spans residues 402–546 (IGVFHNDLQE…YSTYEWENES (145 aa)). Residues 547-929 (KRSSKEKIIV…ALYKSFEAAK (383 aa)) are carbamoyl phosphate synthetic domain. The ATP-grasp 2 domain maps to 671–861 (EKALQDLEIP…MAQLATQMIL (191 aa)). ATP-binding residues include R707, S746, L748, E752, G777, V778, H779, S780, Q820, and E832. 3 residues coordinate Mg(2+): Q820, E832, and N834. Residues Q820, E832, and N834 each coordinate Mn(2+). Positions 930-1064 (LHMADYGSVL…QSRSFTTKNI (135 aa)) constitute an MGS-like domain. Positions 930–1064 (LHMADYGSVL…QSRSFTTKNI (135 aa)) are allosteric domain.

Belongs to the CarB family. In terms of assembly, composed of two chains; the small (or glutamine) chain promotes the hydrolysis of glutamine to ammonia, which is used by the large (or ammonia) chain to synthesize carbamoyl phosphate. Tetramer of heterodimers (alpha,beta)4. Mg(2+) serves as cofactor. The cofactor is Mn(2+).

It carries out the reaction hydrogencarbonate + L-glutamine + 2 ATP + H2O = carbamoyl phosphate + L-glutamate + 2 ADP + phosphate + 2 H(+). It catalyses the reaction hydrogencarbonate + NH4(+) + 2 ATP = carbamoyl phosphate + 2 ADP + phosphate + 2 H(+). It participates in amino-acid biosynthesis; L-arginine biosynthesis; carbamoyl phosphate from bicarbonate: step 1/1. It functions in the pathway pyrimidine metabolism; UMP biosynthesis via de novo pathway; (S)-dihydroorotate from bicarbonate: step 1/3. In terms of biological role, large subunit of the glutamine-dependent carbamoyl phosphate synthetase (CPSase). CPSase catalyzes the formation of carbamoyl phosphate from the ammonia moiety of glutamine, carbonate, and phosphate donated by ATP, constituting the first step of 2 biosynthetic pathways, one leading to arginine and/or urea and the other to pyrimidine nucleotides. The large subunit (synthetase) binds the substrates ammonia (free or transferred from glutamine from the small subunit), hydrogencarbonate and ATP and carries out an ATP-coupled ligase reaction, activating hydrogencarbonate by forming carboxy phosphate which reacts with ammonia to form carbamoyl phosphate. The protein is Carbamoyl phosphate synthase large chain of Lactococcus lactis subsp. lactis (strain IL1403) (Streptococcus lactis).